We begin with the raw amino-acid sequence, 708 residues long: UvrABC system protein B (708 aa).

Residues 32 to 419 (EGIQSGKTAQ…GGEVVEQIIR (388 aa)) enclose the Helicase ATP-binding domain. An ATP-binding site is contributed by 45–52 (GATGTGKT). The short motif at 98-121 (YYDYYQPEAYIPQRDVYIEKDSSI) is the Beta-hairpin element. Residues 436-598 (QVTHLLEQVR…IVPKTVRKSI (163 aa)) form the Helicase C-terminal domain. The region spanning 627–662 (IEYVDKLEQEMLAAAEDLEFERAARLRDRVLQLKEH) is the UVR domain. Residues 668–708 (SEVEIVDEKSAGKSGGRGRGRRGAKKKGASKGTKIPRPKRG) are disordered. Basic residues predominate over residues 683-708 (GRGRGRRGAKKKGASKGTKIPRPKRG).

It belongs to the UvrB family. Forms a heterotetramer with UvrA during the search for lesions. Interacts with UvrC in an incision complex.

The protein localises to the cytoplasm. Functionally, the UvrABC repair system catalyzes the recognition and processing of DNA lesions. A damage recognition complex composed of 2 UvrA and 2 UvrB subunits scans DNA for abnormalities. Upon binding of the UvrA(2)B(2) complex to a putative damaged site, the DNA wraps around one UvrB monomer. DNA wrap is dependent on ATP binding by UvrB and probably causes local melting of the DNA helix, facilitating insertion of UvrB beta-hairpin between the DNA strands. Then UvrB probes one DNA strand for the presence of a lesion. If a lesion is found the UvrA subunits dissociate and the UvrB-DNA preincision complex is formed. This complex is subsequently bound by UvrC and the second UvrB is released. If no lesion is found, the DNA wraps around the other UvrB subunit that will check the other stand for damage. This Rhodopirellula baltica (strain DSM 10527 / NCIMB 13988 / SH1) protein is UvrABC system protein B.